The following is an 888-amino-acid chain: Semaphorin-6B (888 aa).

Positions 1-25 (MQTPRASPPRPALLLLLLLLGGAHG) are cleaved as a signal peptide. Residues 26 to 603 (LFPEEPPPLS…VSVNLLVTSS (578 aa)) are Extracellular-facing. In terms of domain architecture, Sema spans 31–523 (PPPLSVAPRD…FPRCVVRVPV (493 aa)). N-linked (GlcNAc...) asparagine glycosylation is present at Asn74. Disulfide bonds link Cys116–Cys126 and Cys144–Cys153. N-linked (GlcNAc...) asparagine glycans are attached at residues Asn155, Asn167, and Asn291. 2 cysteine pairs are disulfide-bonded: Cys267/Cys378 and Cys292/Cys337. N-linked (GlcNAc...) asparagine glycans are attached at residues Asn386, Asn441, and Asn462. 4 cysteine pairs are disulfide-bonded: Cys486/Cys517, Cys526/Cys544, Cys532/Cys578, and Cys536/Cys552. The chain crosses the membrane as a helical span at residues 604–624 (VAAFVVGAVVSGFSVGWFVGL). Over 625 to 888 (RERRELARRK…GADRTAPPVP (264 aa)) the chain is Cytoplasmic. 3 disordered regions span residues 651–679 (VSRLGERRAQGPGGRGGGGGGGAGVPPEA), 695–742 (LQGG…HPLL), and 757–888 (RAPE…PPVP). The span at 661-674 (GPGGRGGGGGGGAG) shows a compositional bias: gly residues. Arg665 is modified (omega-N-methylarginine). Low complexity predominate over residues 706–717 (LLPTPEQTPLPQ).

Belongs to the semaphorin family. (Microbial infection) Interacts with P.sordellii toxin TcsL; semaphorins SEMA6A and SEMA6B constitute the major host receptors for TcsL in the vascular endothelium. Expressed in the brain in GABAergic neurons.

The protein localises to the cell membrane. Its function is as follows. Functions as a cell surface repellent for mossy fibers of developing neurons in the hippocampus where it plays a role in axon guidance. May function through the PLXNA4 receptor expressed by mossy cell axons. In terms of biological role, (Microbial infection) Acts as a receptor for P.sordellii toxin TcsL in the in the vascular endothelium. In Homo sapiens (Human), this protein is Semaphorin-6B (SEMA6B).